The chain runs to 376 residues: Palmitoyl-[acyl-carrier-protein] 4-desaturase 2, chloroplastic (376 aa).

A chloroplast-targeting transit peptide spans 1–33 (MELHLALRASPLPAADPGRRPPPPRGNFATNCT). 6 residues coordinate Fe cation: glutamate 114, glutamate 149, histidine 152, glutamate 202, glutamate 235, and histidine 238.

The protein belongs to the fatty acid desaturase type 2 family. As to quaternary structure, homodimer. The cofactor is Fe(2+). In terms of tissue distribution, preferentially expressed in the flower labellum.

Its subcellular location is the plastid. The protein localises to the chloroplast stroma. The enzyme catalyses hexadecanoyl-[ACP] + 2 reduced [2Fe-2S]-[ferredoxin] + O2 + 2 H(+) = (4Z)-hexadecenoyl-[ACP] + 2 oxidized [2Fe-2S]-[ferredoxin] + 2 H2O. It carries out the reaction octadecanoyl-[ACP] + 2 reduced [2Fe-2S]-[ferredoxin] + O2 + 2 H(+) = (9Z)-octadecenoyl-[ACP] + 2 oxidized [2Fe-2S]-[ferredoxin] + 2 H2O. It participates in lipid metabolism; fatty acid metabolism. In terms of biological role, converts stearoyl-ACP to oleoyl-ACP by introduction of a cis double bond between carbons 9 and 10 of the acyl chain. Converts palmitoyl-ACP to (4Z)-hexadec-4-enoyl-ACP by introduction of a cis double bond between carbons 4 and 5 of the acyl chain. Catalyzes the desaturation of saturated fatty acid 18:0 and 16:0 to generate 18:1 (delta-9) and 16:1 (delta-4) intermediates, expected to give rise to 9-alkenes and 12-alkenes, respectively. The polypeptide is Palmitoyl-[acyl-carrier-protein] 4-desaturase 2, chloroplastic (SAD2) (Ophrys sphegodes (Early spider orchid)).